The following is a 955-amino-acid chain: Isoleucine--tRNA ligase (955 aa).

Positions 60–70 (PYANGDLHIGH) match the 'HIGH' region motif. Residue Glu-563 participates in L-isoleucyl-5'-AMP binding. Positions 604-608 (KMSKS) match the 'KMSKS' region motif. Residue Lys-607 coordinates ATP. Cys-926, Cys-929, Cys-946, and Cys-949 together coordinate Zn(2+).

It belongs to the class-I aminoacyl-tRNA synthetase family. IleS type 1 subfamily. Monomer. It depends on Zn(2+) as a cofactor.

The protein resides in the cytoplasm. The catalysed reaction is tRNA(Ile) + L-isoleucine + ATP = L-isoleucyl-tRNA(Ile) + AMP + diphosphate. Its function is as follows. Catalyzes the attachment of isoleucine to tRNA(Ile). As IleRS can inadvertently accommodate and process structurally similar amino acids such as valine, to avoid such errors it has two additional distinct tRNA(Ile)-dependent editing activities. One activity is designated as 'pretransfer' editing and involves the hydrolysis of activated Val-AMP. The other activity is designated 'posttransfer' editing and involves deacylation of mischarged Val-tRNA(Ile). The polypeptide is Isoleucine--tRNA ligase (Cyanothece sp. (strain PCC 7425 / ATCC 29141)).